Consider the following 1187-residue polypeptide: DENN domain and WD repeat-containing protein SCD1 (1187 aa).

One can recognise a uDENN domain in the interval 19 to 179 (TVDGDLGFHG…NVPLPTPGKD (161 aa)). Positions 199 to 330 (SLPQADISLQ…EFSTLRNDIL (132 aa)) constitute a cDENN domain. In terms of domain architecture, dDENN spans 332–437 (LLHPNVVAID…ERRLSSDEKS (106 aa)). Disordered regions lie at residues 508 to 536 (SGAL…SSME) and 765 to 793 (SAGL…GRSW). The segment covering 526-536 (NTKEDNFSSME) has biased composition (basic and acidic residues). The span at 779-793 (SDETQQPSEASGRSW) shows a compositional bias: polar residues. WD repeat units follow at residues 841–892 (GHGG…SELR), 897–934 (GHTG…LLEE), 937–975 (GHDS…CVAT), 978–1017 (RCSS…QMHK), 1020–1057 (GHTK…CDAV), 1060–1099 (CHAG…IKCV), 1104–1141 (LHSS…GTKV), and 1152–1187 (RTAA…TINI).

Interacts with FLS2. As to expression, expressed in roots, rosette and cauline leaves, buds and flowers.

The protein localises to the cell membrane. It localises to the cytoplasmic vesicle. The protein resides in the clathrin-coated vesicle. Functionally, involved in growth and development through its role in cytokinesis and polarized cell expansion. Required for plasma membrane internalization. May function in clathrin-mediated membrane trafficking, including plasma membrane endocytosis, essential to both cytokinesis and cell expansion. Acts as a negative regulator of basal resistance against bacteria. This Arabidopsis thaliana (Mouse-ear cress) protein is DENN domain and WD repeat-containing protein SCD1.